The primary structure comprises 444 residues: Phosphoglucosamine mutase (444 aa).

The Phosphoserine intermediate role is filled by S101. Positions 101, 240, 242, and 244 each coordinate Mg(2+). Phosphoserine is present on S101.

It belongs to the phosphohexose mutase family. Mg(2+) serves as cofactor. Activated by phosphorylation.

The catalysed reaction is alpha-D-glucosamine 1-phosphate = D-glucosamine 6-phosphate. Functionally, catalyzes the conversion of glucosamine-6-phosphate to glucosamine-1-phosphate. The protein is Phosphoglucosamine mutase of Aeromonas salmonicida (strain A449).